The primary structure comprises 389 residues: Large envelope protein (389 aa).

An N-acetylmethionine modification is found at Met-1. A lipid anchor (N-myristoyl glycine; by host) is attached at Gly-2. The segment at 2 to 108 (GQNLSVSNPL…PPLRDTHPQA (107 aa)) is pre-S1. The pre-S stretch occupies residues 2-163 (GQNLSVSNPL…FSRTGDPAPN (162 aa)). Over 2–170 (GQNLSVSNPL…APNMENITSG (169 aa)) the chain is Virion surface; in external conformation. Residues 2–242 (GQNLSVSNPL…PGYRWMCLRR (241 aa)) lie on the Intravirion; in internal conformation side of the membrane. The disordered stretch occupies residues 79 to 99 (ALPPPAATNRQSGRQPTPISP). The interval 109 to 163 (MKWNSTVFHQTLQDPRVRGLYFPVGGSSSGTVNPVPTTASHISSIFSRTGDPAPN) is pre-S2. A helical transmembrane segment spans residues 171-191 (FLGPLLVLQAGFFLLTKILTI). Residues 192 to 242 (PQSLDSWWTSLNFLGGAPVCPGQNSQSPTSNHSPTSCPPICPGYRWMCLRR) lie on the Intravirion; in external conformation side of the membrane. Residues 243 to 263 (FIIFLFILLLCLIFLLVLLDY) traverse the membrane as a helical segment. At 264 to 337 (QGMLPVCPLL…WASVRFSWLS (74 aa)) the chain is on the virion surface side. Residue Asn-309 is glycosylated (N-linked (GlcNAc...) asparagine; by host). The helical transmembrane segment at 338-358 (LLAPFVQWFAGLSPTAWLLVI) threads the bilayer. Residues 359–364 (WMIWYW) lie on the Intravirion side of the membrane. Residues 365–387 (GPNLYNILNPFIPLLPIFFCLWV) form a helical membrane-spanning segment. Topologically, residues 388–389 (YI) are virion surface.

The protein belongs to the orthohepadnavirus major surface antigen family. In terms of assembly, in its internal form (Li-HBsAg), interacts with the capsid protein and with the isoform S. Interacts with host chaperone CANX. As to quaternary structure, associates with host chaperone CANX through its pre-S2 N glycan; this association may be essential for isoform M proper secretion. Interacts with isoform L. Interacts with the antigens of satellite virus HDV (HDVAgs); this interaction is required for encapsidation of HDV genomic RNA. Isoform M is N-terminally acetylated by host at a ratio of 90%, and N-glycosylated by host at the pre-S2 region. In terms of processing, myristoylated.

It localises to the virion membrane. The large envelope protein exists in two topological conformations, one which is termed 'external' or Le-HBsAg and the other 'internal' or Li-HBsAg. In its external conformation the protein attaches the virus to cell receptors and thereby initiating infection. This interaction determines the species specificity and liver tropism. This attachment induces virion internalization predominantly through caveolin-mediated endocytosis. The large envelope protein also assures fusion between virion membrane and endosomal membrane. In its internal conformation the protein plays a role in virion morphogenesis and mediates the contact with the nucleocapsid like a matrix protein. Its function is as follows. The middle envelope protein plays an important role in the budding of the virion. It is involved in the induction of budding in a nucleocapsid independent way. In this process the majority of envelope proteins bud to form subviral lipoprotein particles of 22 nm of diameter that do not contain a nucleocapsid. The protein is Large envelope protein of Hylobatidae (gibbons).